The sequence spans 43 residues: Protein PsbN (43 aa).

A helical membrane pass occupies residues 7–27; that stretch reads VAIFISGLLVSFTGYALYTAF.

It belongs to the PsbN family.

Its subcellular location is the plastid. The protein resides in the chloroplast thylakoid membrane. Functionally, may play a role in photosystem I and II biogenesis. The chain is Protein PsbN from Daucus carota (Wild carrot).